Reading from the N-terminus, the 142-residue chain is Large ribosomal subunit protein uL13 (142 aa).

Belongs to the universal ribosomal protein uL13 family. Part of the 50S ribosomal subunit.

In terms of biological role, this protein is one of the early assembly proteins of the 50S ribosomal subunit, although it is not seen to bind rRNA by itself. It is important during the early stages of 50S assembly. The chain is Large ribosomal subunit protein uL13 from Histophilus somni (strain 129Pt) (Haemophilus somnus).